A 538-amino-acid polypeptide reads, in one-letter code: Putative amidase kk1C (538 aa).

The interval 1–32 (MTEPTWKTVASEKQQQRESKIPSEWQIPKSSH) is disordered. Active-site charge relay system residues include lysine 134 and serine 209. Serine 233 serves as the catalytic Acyl-ester intermediate.

The protein belongs to the amidase family.

The catalysed reaction is a monocarboxylic acid amide + H2O = a monocarboxylate + NH4(+). It functions in the pathway secondary metabolite biosynthesis. In terms of biological role, putative amidase; part of the gene cluster that mediates the biosynthesis of KK-1, a novel cyclic depsipeptide with 10 residues which is a promising active compound with high activity against many plant pathogens, especially Botrytis cinerea. The role of kk1C in KK-1 biosynthesis has still to be determined. The nonribosomal peptide synthetase (NRPS) kk1B catalyzes the elongation and cyclization of the decapeptide chain composed of 1 D-lactic acid residue (D-Lac), 1 pipecolic acid residue (Pip), 1 aspartic acid residue (Asp), 1 isoleucine residue (Ile), 1 glycine residue (Gly), 1 tyrosine residue (Tyr) and 4 valine residues (Val). The Asp, Ile and 3 Val residues are N-methylated by the 5 methyltransferase domains from the NRPS (found in modules 3, 5, 6, 7 and 9), whereas the Tyr residue is O-methylated by the cluster encoded O-methyltransferase kk1A. The thioesterase kk1J is likely to be involved in the corrective mechanism of peptide chain synthesis. The D-lactate dehydrogenase kk1H is involved in the synthesis of D-lactic acid from pyruvic acid, which is recognized by the A domain of the first kk1B module. The pyrroline-5-carboxylate reductase kk1I is involved in the synthesis of the L-pipecolic acid residue of KK-1 from delta-1-pyrroline-5-carboxylate (P5C), a metabolic intermediate of lysine. It is still unclear how kk1C and kk1D are involved in the production of KK-1. The polypeptide is Putative amidase kk1C (Curvularia clavata).